We begin with the raw amino-acid sequence, 163 residues long: Succinate dehydrogenase assembly factor 2, mitochondrial (163 aa).

This sequence belongs to the SDHAF2 family. In terms of assembly, interacts with the flavoprotein subunit within the SDH catalytic dimer.

The protein localises to the mitochondrion matrix. Its function is as follows. Plays an essential role in the assembly of succinate dehydrogenase (SDH), an enzyme complex (also referred to as respiratory complex II) that is a component of both the tricarboxylic acid (TCA) cycle and the mitochondrial electron transport chain, and which couples the oxidation of succinate to fumarate with the reduction of ubiquinone (coenzyme Q) to ubiquinol. Required for flavinylation (covalent attachment of FAD) of the flavoprotein subunit of the SDH catalytic dimer. In Kluyveromyces lactis (strain ATCC 8585 / CBS 2359 / DSM 70799 / NBRC 1267 / NRRL Y-1140 / WM37) (Yeast), this protein is Succinate dehydrogenase assembly factor 2, mitochondrial.